A 258-amino-acid chain; its full sequence is UPF0246 protein Pnap_3166 (258 aa).

It belongs to the UPF0246 family.

The chain is UPF0246 protein Pnap_3166 from Polaromonas naphthalenivorans (strain CJ2).